A 668-amino-acid chain; its full sequence is tRNA 5-methylaminomethyl-2-thiouridine biosynthesis bifunctional protein MnmC (668 aa).

The tRNA (mnm(5)s(2)U34)-methyltransferase stretch occupies residues 1-245 (MKHYSIQPAN…KREMLCGVME (245 aa)). The tract at residues 270-668 (IGGGIASALL…LLKGKAVKAG (399 aa)) is FAD-dependent cmnm(5)s(2)U34 oxidoreductase.

The protein in the N-terminal section; belongs to the methyltransferase superfamily. tRNA (mnm(5)s(2)U34)-methyltransferase family. In the C-terminal section; belongs to the DAO family. It depends on FAD as a cofactor.

Its subcellular location is the cytoplasm. It catalyses the reaction 5-aminomethyl-2-thiouridine(34) in tRNA + S-adenosyl-L-methionine = 5-methylaminomethyl-2-thiouridine(34) in tRNA + S-adenosyl-L-homocysteine + H(+). Its function is as follows. Catalyzes the last two steps in the biosynthesis of 5-methylaminomethyl-2-thiouridine (mnm(5)s(2)U) at the wobble position (U34) in tRNA. Catalyzes the FAD-dependent demodification of cmnm(5)s(2)U34 to nm(5)s(2)U34, followed by the transfer of a methyl group from S-adenosyl-L-methionine to nm(5)s(2)U34, to form mnm(5)s(2)U34. The chain is tRNA 5-methylaminomethyl-2-thiouridine biosynthesis bifunctional protein MnmC from Escherichia coli O9:H4 (strain HS).